Reading from the N-terminus, the 182-residue chain is Oligoribonuclease (182 aa).

The region spanning 8-171 (LIWLDMEMTG…ADIHESIGEL (164 aa)) is the Exonuclease domain. Tyr129 is a catalytic residue.

It belongs to the oligoribonuclease family.

The protein localises to the cytoplasm. In terms of biological role, 3'-to-5' exoribonuclease specific for small oligoribonucleotides. This chain is Oligoribonuclease, found in Azoarcus sp. (strain BH72).